Here is a 1500-residue protein sequence, read N- to C-terminus: Rho GTPase-activating protein 35 (1500 aa).

The interval methionine 1–glutamine 266 is has GTPase activity, required for proper localization. Residues lysine 28, isoleucine 33 to cysteine 37, leucine 52, serine 56, glutamate 95 to threonine 97, lysine 201 to aspartate 203, and serine 229 to arginine 231 contribute to the GTP site. FF domains lie at isoleucine 270–arginine 327, lysine 368–lysine 422, arginine 429–glutamine 483, and isoleucine 485–phenylalanine 550. Tyrosine 308 is modified (phosphotyrosine). Residue serine 589 is modified to Phosphoserine. Residues aspartate 592–leucine 767 form the pG1 pseudoGTPase domain. Phosphoserine occurs at positions 770 and 773. The region spanning arginine 783–isoleucine 947 is the pG2 pseudoGTPase domain. Phosphoserine is present on residues serine 970, serine 975, serine 985, serine 1002, and serine 1073. Residues serine 970–isoleucine 989 are disordered. The segment at serine 1058 to glutamate 1090 is disordered. Tyrosine 1088 bears the Phosphotyrosine mark. At tyrosine 1106 the chain carries Phosphotyrosine; by ABL2 and PTK6. Over residues lysine 1125–serine 1142 the composition is skewed to polar residues. The tract at residues lysine 1125–glycine 1147 is disordered. Phosphoserine occurs at positions 1135, 1143, 1151, 1177, 1180, and 1222. The tract at residues valine 1178–tyrosine 1208 is disordered. The interval proline 1214–serine 1237 is required for phospholipid binding and regulation of the substrate preference. Threonine 1227 is modified (phosphothreonine). Serine 1237 is modified (phosphoserine). Residues valine 1250 to phenylalanine 1437 form the Rho-GAP domain. Positions glutamate 1444–leucine 1500 are disordered. Over residues threonine 1449 to glutamine 1471 the composition is skewed to low complexity. The span at proline 1472 to glutamine 1483 shows a compositional bias: pro residues. Phosphoserine is present on residues serine 1473 and serine 1477. Threonine 1481 carries the post-translational modification Phosphothreonine. At serine 1484 the chain carries Phosphoserine. Residues leucine 1490–leucine 1500 show a composition bias toward polar residues.

Interacts with RASA1. Interacts with the general transcription factor GTF2I, the interaction sequesters GTF2I in the cytoplasm. Post-translationally, phosphorylation of Tyr-1106 by PTK6 promotes the association with RASA1, inactivating RHOA while activating RAS. Phosphorylation at Tyr-308 by PDGFRA inhibits binding to GTF2I. Phosphorylated by PRKCA at Ser-1222 and Thr-1227, induces relocalization from the cytoplasm to regions of plasma membrane ruffling and prevents the binding and substrate specificity regulation by phospholipids. In brain, phosphorylated by FYN and SRC. During focal adhesion formation, phosphorylated by MAPK1 and MAPK3 at the C-terminal region, probably at Ser-1452, Ser-1477, Thr-1481 and Ser-1484. Phosphorylation by MAPK1 and MAPK3 inhibits GAP function and localizes ARGHAP35 away from newly forming focal adhesions and stress fibers in cells spreading on fibronectin. Phosphorylation at Ser-1477 and Thr-1481 by GSK3B requires priming by MAPK and inhibits RhoGAP activity and modulates polarized cell migration. As to expression, strongly expressed in retina (photoreceptor layer) and brain. Expression is maximal in the occipital, frontal, temporal lobe and also the cerebellum. Medium expression in the medulla and also in kidney, lung, liver, heart and spleen.

Its subcellular location is the cytoplasm. The protein localises to the cytoskeleton. It is found in the cilium basal body. The protein resides in the nucleus. It localises to the cell membrane. In terms of biological role, rho GTPase-activating protein (GAP). Binds several acidic phospholipids which inhibits the Rho GAP activity to promote the Rac GAP activity. This binding is inhibited by phosphorylation by PRKCA. Involved in cell differentiation as well as cell adhesion and migration, plays an important role in retinal tissue morphogenesis, neural tube fusion, midline fusion of the cerebral hemispheres and mammary gland branching morphogenesis. Transduces signals from p21-ras to the nucleus, acting via the ras GTPase-activating protein (GAP). Transduces SRC-dependent signals from cell-surface adhesion molecules, such as laminin, to promote neurite outgrowth. Regulates axon outgrowth, guidance and fasciculation. Modulates Rho GTPase-dependent F-actin polymerization, organization and assembly, is involved in polarized cell migration and in the positive regulation of ciliogenesis and cilia elongation. During mammary gland development, is required in both the epithelial and stromal compartments for ductal outgrowth. Represses transcription of the glucocorticoid receptor by binding to the cis-acting regulatory sequence 5'-GAGAAAAGAAACTGGAGAAACTC-3'; this function is however unclear and would need additional experimental evidences. The chain is Rho GTPase-activating protein 35 from Canis lupus familiaris (Dog).